The chain runs to 155 residues: uncharacterized protein (155 aa).

2 disordered regions span residues Met-1 to Phe-22 and Pro-108 to Ala-155. Position 2 is an N-acetylserine (Ser-2). Phosphoserine occurs at positions 136, 144, and 146. Positions Ser-136 to Ala-155 are enriched in acidic residues.

This is an uncharacterized protein from Rattus norvegicus (Rat).